Here is a 209-residue protein sequence, read N- to C-terminus: MGKIEVINHPLIQHKLSILRRTDTSTKAFRELVDEIAMLMGYEVLRDLPLEDVEIETPITKTVQKQLAGKKLAIVPILRAGIGMVDGLLNLVPAAKVGHIGMYRDEETLQPVEYLVKLPEDIDQRQIFVVDPMLATGGSAILAVDSLKKRGASNIKFVCLVSAPEGVKALQEAHPDVEIFTAALDERLNEHGYIVPGLGDAGDRLFGTK.

5-phospho-alpha-D-ribose 1-diphosphate-binding positions include Arg-79, Arg-104, and 131 to 139 (DPMLATGGS). Uracil is bound by residues Ile-194 and 199 to 201 (GDA). Residue Asp-200 coordinates 5-phospho-alpha-D-ribose 1-diphosphate.

It belongs to the UPRTase family. It depends on Mg(2+) as a cofactor.

The enzyme catalyses UMP + diphosphate = 5-phospho-alpha-D-ribose 1-diphosphate + uracil. It functions in the pathway pyrimidine metabolism; UMP biosynthesis via salvage pathway; UMP from uracil: step 1/1. With respect to regulation, allosterically activated by GTP. In terms of biological role, catalyzes the conversion of uracil and 5-phospho-alpha-D-ribose 1-diphosphate (PRPP) to UMP and diphosphate. The chain is Uracil phosphoribosyltransferase from Streptococcus pneumoniae serotype 4 (strain ATCC BAA-334 / TIGR4).